A 359-amino-acid chain; its full sequence is Lachesin (359 aa).

The first 25 residues, 1–25, serve as a signal peptide directing secretion; the sequence is MWRPSISNCVWSTLLLAIFVQQTLA. Residues 29–130 enclose the Ig-like V-type domain; it reads PTISYITQEQ…HKVSAEVKLS (102 aa). C50 and C113 are oxidised to a cystine. N-linked (GlcNAc...) asparagine glycosylation is found at N92 and N140. 2 consecutive Ig-like C2-type domains span residues 135 to 221 and 226 to 317; these read PVIS…INVE and PVIT…ARVN. 2 disulfides stabilise this stretch: C157–C204 and C247–C303. Residue A336 is the site of GPI-anchor amidated alanine attachment. Residues 337-359 constitute a propeptide, removed in mature form; that stretch reads GAEDVSATSFALVGILAALLFAR.

As to expression, expressed on differentiating neuronal cells from the onset of neurogenesis in both the central and peripheral nervous systems. First detected in the cellularized blastoderm, apart from in the ventral side. Expression persists uniformly in the early ectoderm until the end of gastrulation. From stage 10, expressed in an alternating strong/weak pattern in each segment until stage 15 when it disappears. From stage 11, expressed in subsets of neurons and later subsets of glial cells. From early stage 13, strongly expressed in trachea, hindgut, foregut and the nervous system.

The protein localises to the cell membrane. In terms of biological role, required for normal tracheal development and maintenance of the trans-epithelial diffusion barrier. Functions as a homophilic cell-adhesion molecule. May play a role in early neuronal differentiation and axon outgrowth. The chain is Lachesin (Lac) from Drosophila melanogaster (Fruit fly).